A 463-amino-acid polypeptide reads, in one-letter code: Nuclear hormone receptor family member nhr-3 (463 aa).

The segment at residues 50–125 is a DNA-binding region (nuclear receptor); sequence STICSVCCDE…VGMEPDAIRP (76 aa). 2 consecutive NR C4-type zinc fingers follow at residues 53-73 and 89-113; these read CSVC…CFGC and CRYS…FQKC. Positions 121 to 131 are enriched in basic and acidic residues; it reads DAIRPDRDKTG. The disordered stretch occupies residues 121-143; that stretch reads DAIRPDRDKTGRQKNPRRNTEGS. The NR LBD domain maps to 199–462; it reads EIENIVIQLQ…VLEELLFLDR (264 aa).

Belongs to the nuclear hormone receptor family.

The protein localises to the nucleus. Functionally, orphan nuclear receptor. In Caenorhabditis elegans, this protein is Nuclear hormone receptor family member nhr-3 (nhr-3).